The following is a 220-amino-acid chain: 7-cyano-7-deazaguanine synthase (220 aa).

Residue 10-20 (FSGGQDSTTCL) participates in ATP binding. Positions 186, 195, 198, and 201 each coordinate Zn(2+).

Belongs to the QueC family. Homodimer. It depends on Zn(2+) as a cofactor.

The catalysed reaction is 7-carboxy-7-deazaguanine + NH4(+) + ATP = 7-cyano-7-deazaguanine + ADP + phosphate + H2O + H(+). It functions in the pathway purine metabolism; 7-cyano-7-deazaguanine biosynthesis. In terms of biological role, catalyzes the ATP-dependent conversion of 7-carboxy-7-deazaguanine (CDG) to 7-cyano-7-deazaguanine (preQ(0)). The chain is 7-cyano-7-deazaguanine synthase from Bacillus cereus (strain AH187).